We begin with the raw amino-acid sequence, 113 residues long: uncharacterized protein (113 aa).

A signal peptide spans 1–22; it reads MCRFPTFLLIAIAITMLPTILS. The N-linked (GlcNAc...) asparagine glycan is linked to Asn-47.

It is found in the secreted. This is an uncharacterized protein from Caenorhabditis elegans.